We begin with the raw amino-acid sequence, 174 residues long: uncharacterized protein (174 aa).

This sequence belongs to the archaeal NMN adenylyltransferase family.

This is an uncharacterized protein from Archaeoglobus fulgidus (strain ATCC 49558 / DSM 4304 / JCM 9628 / NBRC 100126 / VC-16).